The following is a 469-amino-acid chain: ATP-dependent protease ATPase subunit HslU (469 aa).

ATP-binding positions include isoleucine 24, 66 to 71 (GVGKTE), aspartate 282, glutamate 347, and arginine 419.

Belongs to the ClpX chaperone family. HslU subfamily. In terms of assembly, a double ring-shaped homohexamer of HslV is capped on each side by a ring-shaped HslU homohexamer. The assembly of the HslU/HslV complex is dependent on binding of ATP.

The protein resides in the cytoplasm. Its function is as follows. ATPase subunit of a proteasome-like degradation complex; this subunit has chaperone activity. The binding of ATP and its subsequent hydrolysis by HslU are essential for unfolding of protein substrates subsequently hydrolyzed by HslV. HslU recognizes the N-terminal part of its protein substrates and unfolds these before they are guided to HslV for hydrolysis. The protein is ATP-dependent protease ATPase subunit HslU of Listeria monocytogenes serotype 4b (strain CLIP80459).